The following is an 882-amino-acid chain: Alanine--tRNA ligase (882 aa).

Zn(2+)-binding residues include His-576, His-580, Cys-678, and His-682.

Belongs to the class-II aminoacyl-tRNA synthetase family. The cofactor is Zn(2+).

Its subcellular location is the cytoplasm. The enzyme catalyses tRNA(Ala) + L-alanine + ATP = L-alanyl-tRNA(Ala) + AMP + diphosphate. In terms of biological role, catalyzes the attachment of alanine to tRNA(Ala) in a two-step reaction: alanine is first activated by ATP to form Ala-AMP and then transferred to the acceptor end of tRNA(Ala). Also edits incorrectly charged Ser-tRNA(Ala) and Gly-tRNA(Ala) via its editing domain. In Anaplasma marginale (strain St. Maries), this protein is Alanine--tRNA ligase.